We begin with the raw amino-acid sequence, 233 residues long: Ras-related protein RABA6a (233 aa).

20–27 (GDSAVGKS) is a binding site for GTP. The Effector region signature appears at 42-50 (SKPTIGVEF). GTP contacts are provided by residues 68-72 (DTAGQ), 126-129 (NKSD), and 156-157 (SA). 2 S-geranylgeranyl cysteine lipidation sites follow: C230 and C231.

The protein belongs to the small GTPase superfamily. Rab family.

It localises to the cell membrane. Functionally, intracellular vesicle trafficking and protein transport. This chain is Ras-related protein RABA6a (RABA6A), found in Arabidopsis thaliana (Mouse-ear cress).